A 173-amino-acid polypeptide reads, in one-letter code: NADH-ubiquinone oxidoreductase chain 6 (173 aa).

The next 4 membrane-spanning stretches (helical) occupy residues 24-44, 49-69, 80-100, and 139-159; these read MSIM…TGTM, WLSY…FIYI, IKIN…TLMY, and PTVI…LAVV.

Belongs to the complex I subunit 6 family.

Its subcellular location is the mitochondrion membrane. The enzyme catalyses a ubiquinone + NADH + 5 H(+)(in) = a ubiquinol + NAD(+) + 4 H(+)(out). Core subunit of the mitochondrial membrane respiratory chain NADH dehydrogenase (Complex I) that is believed to belong to the minimal assembly required for catalysis. Complex I functions in the transfer of electrons from NADH to the respiratory chain. The immediate electron acceptor for the enzyme is believed to be ubiquinone. This chain is NADH-ubiquinone oxidoreductase chain 6 (ND6), found in Locusta migratoria (Migratory locust).